The following is a 117-amino-acid chain: Ig heavy chain V region 102 (117 aa).

An N-terminal signal peptide occupies residues Met-1 to Ser-19. The interval His-20–Thr-49 is framework-1. A disulfide bridge links Cys-41 with Cys-115. The interval Ser-50–His-54 is complementarity-determining-1. The segment at Trp-55–Gly-68 is framework-2. Residues Arg-69–Gly-85 form a complementarity-determining-2 region. Residues Lys-86–Ile-117 form a framework-3 region.

In Mus musculus (Mouse), this protein is Ig heavy chain V region 102.